A 626-amino-acid chain; its full sequence is DNA topoisomerase 4 subunit A (626 aa).

The Topo IIA-type catalytic domain occupies 24 to 439 (IASVVDGFKP…RGYSINFIDL (416 aa)). The O-(5'-phospho-DNA)-tyrosine intermediate role is filled by tyrosine 105.

Belongs to the type II topoisomerase GyrA/ParC subunit family. Heterotetramer composed of ParC and ParE.

The protein localises to the cell membrane. The catalysed reaction is ATP-dependent breakage, passage and rejoining of double-stranded DNA.. Its function is as follows. Topoisomerase IV is essential for chromosome segregation. It relaxes supercoiled DNA. Performs the decatenation events required during the replication of a circular DNA molecule. This chain is DNA topoisomerase 4 subunit A (parC), found in Borreliella burgdorferi (strain ATCC 35210 / DSM 4680 / CIP 102532 / B31) (Borrelia burgdorferi).